A 261-amino-acid chain; its full sequence is 3-methyl-2-oxobutanoate hydroxymethyltransferase (261 aa).

Aspartate 42 and aspartate 81 together coordinate Mg(2+). Residues 42-43 (DS), aspartate 81, and lysine 110 contribute to the 3-methyl-2-oxobutanoate site. Residue glutamate 112 participates in Mg(2+) binding. Glutamate 179 acts as the Proton acceptor in catalysis.

It belongs to the PanB family. As to quaternary structure, homodecamer; pentamer of dimers. Requires Mg(2+) as cofactor.

It is found in the cytoplasm. It catalyses the reaction 3-methyl-2-oxobutanoate + (6R)-5,10-methylene-5,6,7,8-tetrahydrofolate + H2O = 2-dehydropantoate + (6S)-5,6,7,8-tetrahydrofolate. It participates in cofactor biosynthesis; coenzyme A biosynthesis. Functionally, catalyzes the reversible reaction in which hydroxymethyl group from 5,10-methylenetetrahydrofolate is transferred onto alpha-ketoisovalerate to form ketopantoate. This is 3-methyl-2-oxobutanoate hydroxymethyltransferase from Pyrobaculum neutrophilum (strain DSM 2338 / JCM 9278 / NBRC 100436 / V24Sta) (Thermoproteus neutrophilus).